A 98-amino-acid chain; its full sequence is NADH-ubiquinone oxidoreductase chain 4L (98 aa).

Helical transmembrane passes span 1–21 (MTPV…GLAF), 29–49 (ALLC…LWAL), and 58–78 (VAPM…LALL).

Belongs to the complex I subunit 4L family.

It localises to the mitochondrion membrane. The catalysed reaction is a ubiquinone + NADH + 5 H(+)(in) = a ubiquinol + NAD(+) + 4 H(+)(out). Core subunit of the mitochondrial membrane respiratory chain NADH dehydrogenase (Complex I) which catalyzes electron transfer from NADH through the respiratory chain, using ubiquinone as an electron acceptor. Part of the enzyme membrane arm which is embedded in the lipid bilayer and involved in proton translocation. The polypeptide is NADH-ubiquinone oxidoreductase chain 4L (MT-ND4L) (Salmo salar (Atlantic salmon)).